Reading from the N-terminus, the 264-residue chain is [LysW]-aminoadipate/[LysW]-glutamate kinase (264 aa).

Substrate contacts are provided by residues 35–36 (GG), Arg-62, and Asn-167.

The protein belongs to the acetylglutamate kinase family. LysZ subfamily.

It localises to the cytoplasm. The enzyme catalyses [amino-group carrier protein]-C-terminal-N-(1,4-dicarboxybutan-1-yl)-L-glutamine + ATP = [amino-group carrier protein]-C-terminal-N-(1-carboxy-5-phosphooxy-5-oxopentan-1-yl)-L-glutamine + ADP. It catalyses the reaction [amino-group carrier protein]-C-terminal-gamma-(L-glutamyl)-L-glutamate + ATP = [amino-group carrier protein]-C-terminal-gamma-(5-phospho-L-glutamyl)-L-glutamate + ADP. It functions in the pathway amino-acid biosynthesis; L-lysine biosynthesis via AAA pathway; L-lysine from L-alpha-aminoadipate (Thermus route): step 2/5. It participates in amino-acid biosynthesis; L-arginine biosynthesis. Its function is as follows. Involved in both the arginine and lysine biosynthetic pathways. Phosphorylates the LysW-bound precursors glutamate (for arginine biosynthesis), respectively alpha-aminoadipate (for lysine biosynthesis). The protein is [LysW]-aminoadipate/[LysW]-glutamate kinase of Saccharolobus islandicus (strain Y.N.15.51 / Yellowstone #2) (Sulfolobus islandicus).